Consider the following 390-residue polypeptide: Probable tRNA sulfurtransferase (390 aa).

Residues 60–162 enclose the THUMP domain; the sequence is KQIIDDLKEV…YDCAIVYGHK (103 aa). ATP-binding positions include 180–181, 205–206, arginine 264, glycine 286, and glutamine 295; these read LL and TF.

This sequence belongs to the ThiI family.

Its subcellular location is the cytoplasm. It carries out the reaction [ThiI sulfur-carrier protein]-S-sulfanyl-L-cysteine + a uridine in tRNA + 2 reduced [2Fe-2S]-[ferredoxin] + ATP + H(+) = [ThiI sulfur-carrier protein]-L-cysteine + a 4-thiouridine in tRNA + 2 oxidized [2Fe-2S]-[ferredoxin] + AMP + diphosphate. The catalysed reaction is [ThiS sulfur-carrier protein]-C-terminal Gly-Gly-AMP + S-sulfanyl-L-cysteinyl-[cysteine desulfurase] + AH2 = [ThiS sulfur-carrier protein]-C-terminal-Gly-aminoethanethioate + L-cysteinyl-[cysteine desulfurase] + A + AMP + 2 H(+). It participates in cofactor biosynthesis; thiamine diphosphate biosynthesis. Functionally, catalyzes the ATP-dependent transfer of a sulfur to tRNA to produce 4-thiouridine in position 8 of tRNAs, which functions as a near-UV photosensor. Also catalyzes the transfer of sulfur to the sulfur carrier protein ThiS, forming ThiS-thiocarboxylate. This is a step in the synthesis of thiazole, in the thiamine biosynthesis pathway. The sulfur is donated as persulfide by IscS. The polypeptide is Probable tRNA sulfurtransferase (Ureaplasma parvum serovar 3 (strain ATCC 27815 / 27 / NCTC 11736)).